A 345-amino-acid polypeptide reads, in one-letter code: UDP-N-acetylenolpyruvoylglucosamine reductase (345 aa).

The 171-residue stretch at 16–186 folds into the FAD-binding PCMH-type domain; sequence LSVSASCIKV…TAVGIFLKKE (171 aa). Arg162 is a catalytic residue. Ser232 (proton donor) is an active-site residue. Residue Glu328 is part of the active site.

Belongs to the MurB family. The cofactor is FAD.

The protein resides in the cytoplasm. The enzyme catalyses UDP-N-acetyl-alpha-D-muramate + NADP(+) = UDP-N-acetyl-3-O-(1-carboxyvinyl)-alpha-D-glucosamine + NADPH + H(+). Its pathway is cell wall biogenesis; peptidoglycan biosynthesis. Cell wall formation. This is UDP-N-acetylenolpyruvoylglucosamine reductase from Pectobacterium atrosepticum (strain SCRI 1043 / ATCC BAA-672) (Erwinia carotovora subsp. atroseptica).